Consider the following 392-residue polypeptide: Sulfate adenylyltransferase (392 aa).

Belongs to the sulfate adenylyltransferase family.

It carries out the reaction sulfate + ATP + H(+) = adenosine 5'-phosphosulfate + diphosphate. It participates in sulfur metabolism; hydrogen sulfide biosynthesis; sulfite from sulfate: step 1/3. The protein is Sulfate adenylyltransferase of Trichormus variabilis (strain ATCC 29413 / PCC 7937) (Anabaena variabilis).